Reading from the N-terminus, the 342-residue chain is 3-isopropylmalate dehydrogenase (342 aa).

R87, R97, R121, and D212 together coordinate substrate. Residues D212, D236, and D240 each contribute to the Mg(2+) site. 272 to 284 (GSAPDIAGRQLAD) is an NAD(+) binding site. Over residues 319–328 (RAAAGAAQPS) the composition is skewed to low complexity. Residues 319–342 (RAAAGAAQPSTRERGEDLAARAAG) form a disordered region. A compositionally biased stretch (basic and acidic residues) spans 329 to 342 (TRERGEDLAARAAG).

The protein belongs to the isocitrate and isopropylmalate dehydrogenases family. LeuB type 2 subfamily. In terms of assembly, homodimer. Mg(2+) serves as cofactor. Mn(2+) is required as a cofactor.

The protein resides in the cytoplasm. The enzyme catalyses (2R,3S)-3-isopropylmalate + NAD(+) = 4-methyl-2-oxopentanoate + CO2 + NADH. Its pathway is amino-acid biosynthesis; L-leucine biosynthesis; L-leucine from 3-methyl-2-oxobutanoate: step 3/4. Its function is as follows. Catalyzes the oxidation of 3-carboxy-2-hydroxy-4-methylpentanoate (3-isopropylmalate) to 3-carboxy-4-methyl-2-oxopentanoate. The product decarboxylates to 4-methyl-2 oxopentanoate. The sequence is that of 3-isopropylmalate dehydrogenase from Frankia casuarinae (strain DSM 45818 / CECT 9043 / HFP020203 / CcI3).